Reading from the N-terminus, the 627-residue chain is Protein zyg-11 homolog A (627 aa).

3 LRR repeats span residues 123–146, 203–227, and 409–432; these read LPNL…LSCK, LPNL…SFLQ, and ITSI…LIMA.

It belongs to the zyg-11 family.

Functionally, probably acts as a target recruitment subunit in an E3 ubiquitin ligase complex ZYGA-CUL2-elongin BC. The sequence is that of Protein zyg-11 homolog A (Zyg11a) from Mus musculus (Mouse).